Here is a 337-residue protein sequence, read N- to C-terminus: Protein SphX (337 aa).

An N-terminal signal peptide occupies residues 1–30; it reads MTTLKPALRRAAVLLPIAAVASSLFPIQEA.

Belongs to the PstS family. Post-translationally, the N-terminus is blocked.

The protein resides in the cell inner membrane. May be involved in the system for phosphate transport across the cytoplasmic membrane. The sequence is that of Protein SphX (sphX) from Synechococcus elongatus (strain ATCC 33912 / PCC 7942 / FACHB-805) (Anacystis nidulans R2).